The primary structure comprises 782 residues: E3 ubiquitin-protein ligase SopA (782 aa).

Residues V137–A171 are disordered. Positions P157–A171 are enriched in low complexity. Residue C753 is the Glycyl thioester intermediate of the active site.

It belongs to the SopA E3 ligase family. Ubiquitinated in the presence of host E1 ubiquitin-activating enzyme, E2 ubiquitin-conjugating enzyme and ubiquitin.

It localises to the secreted. It is found in the host cell. It catalyses the reaction S-ubiquitinyl-[E2 ubiquitin-conjugating enzyme]-L-cysteine + [acceptor protein]-L-lysine = [E2 ubiquitin-conjugating enzyme]-L-cysteine + N(6)-ubiquitinyl-[acceptor protein]-L-lysine.. Its function is as follows. Effector proteins function to alter host cell physiology and promote bacterial survival in host tissues. This protein is an E3 ubiquitin ligase that interferes with host's ubiquitination pathway. The polypeptide is E3 ubiquitin-protein ligase SopA (sopA) (Salmonella heidelberg (strain SL476)).